The following is a 192-amino-acid chain: Dynein axonemal light chain 1 (192 aa).

LRR repeat units lie at residues 49–70 (NCER…NGLK), 71–92 (NLKI…EAVG), 94–115 (TLEE…HVMK), and 116–137 (KLKV…LKLA). The region spanning 150–192 (NPLEEKYSADGNWIEEATKRLPKLKKLDGNPVIKQEEETEGES) is the LRRCT domain.

The protein belongs to the dynein light chain LC1-type family. As to quaternary structure, interacts with DNAH5, a outer arm dynein heavy chain. Interacts with tubulin located within the A-tubule of the outer doublets in a ATP-independent manner.

The protein localises to the cytoplasm. It is found in the cytoskeleton. The protein resides in the cilium axoneme. In terms of biological role, part of the multisubunit axonemal ATPase complexes that generate the force for cilia motility and govern beat frequency. Component of the outer arm dynein (ODA). May be involved in a mechanosensory feedback mechanism controlling ODA activity based on external conformational cues by tethering the outer arm dynein heavy chain (DNAH5) to the microtubule within the axoneme. The protein is Dynein axonemal light chain 1 (dnal1) of Danio rerio (Zebrafish).